A 205-amino-acid polypeptide reads, in one-letter code: Small ribosomal subunit protein uS4 (205 aa).

Residues 1–16 (MSKRESSKYKIDRRMG) are compositionally biased toward basic and acidic residues. The segment at 1 to 46 (MSKRESSKYKIDRRMGENIWGRPKSPVNRREYGPGQHGQRRKSKLS) is disordered. The 64-residue stretch at 94–157 (SRLDAIVYRA…KQLVSVLESV (64 aa)) folds into the S4 RNA-binding domain.

Belongs to the universal ribosomal protein uS4 family. Part of the 30S ribosomal subunit. Contacts protein S5. The interaction surface between S4 and S5 is involved in control of translational fidelity.

In terms of biological role, one of the primary rRNA binding proteins, it binds directly to 16S rRNA where it nucleates assembly of the body of the 30S subunit. With S5 and S12 plays an important role in translational accuracy. This chain is Small ribosomal subunit protein uS4, found in Sinorhizobium fredii (strain NBRC 101917 / NGR234).